A 392-amino-acid polypeptide reads, in one-letter code: NAD(P)H-quinone oxidoreductase subunit H (392 aa).

It belongs to the complex I 49 kDa subunit family. NDH-1 can be composed of about 15 different subunits; different subcomplexes with different compositions have been identified which probably have different functions.

The protein resides in the cellular thylakoid membrane. It catalyses the reaction a plastoquinone + NADH + (n+1) H(+)(in) = a plastoquinol + NAD(+) + n H(+)(out). The catalysed reaction is a plastoquinone + NADPH + (n+1) H(+)(in) = a plastoquinol + NADP(+) + n H(+)(out). NDH-1 shuttles electrons from an unknown electron donor, via FMN and iron-sulfur (Fe-S) centers, to quinones in the respiratory and/or the photosynthetic chain. The immediate electron acceptor for the enzyme in this species is believed to be plastoquinone. Couples the redox reaction to proton translocation, and thus conserves the redox energy in a proton gradient. Cyanobacterial NDH-1 also plays a role in inorganic carbon-concentration. The chain is NAD(P)H-quinone oxidoreductase subunit H from Synechococcus sp. (strain JA-2-3B'a(2-13)) (Cyanobacteria bacterium Yellowstone B-Prime).